A 488-amino-acid chain; its full sequence is Inosine-5'-monophosphate dehydrogenase (488 aa).

CBS domains follow at residues 95-153 (VISN…SIKI) and 157-216 (MTQE…AKDE). NAD(+) contacts are provided by residues D250 and 300-302 (GIG). G302 and G304 together coordinate K(+). An IMP-binding site is contributed by S305. C307 serves as a coordination point for K(+). C307 (thioimidate intermediate) is an active-site residue. Residues 340–342 (DGG), 363–364 (GS), and 387–391 (YRGMG) each bind IMP. R403 functions as the Proton acceptor in the catalytic mechanism. An IMP-binding site is contributed by E417. Positions 468–488 (GLAESHPHNIQITKESPNYSF) are disordered. 3 residues coordinate K(+): E471, S472, and H473. The span at 475–488 (HNIQITKESPNYSF) shows a compositional bias: polar residues.

It belongs to the IMPDH/GMPR family. As to quaternary structure, homotetramer. K(+) serves as cofactor.

It carries out the reaction IMP + NAD(+) + H2O = XMP + NADH + H(+). It functions in the pathway purine metabolism; XMP biosynthesis via de novo pathway; XMP from IMP: step 1/1. Mycophenolic acid (MPA) is a non-competitive inhibitor that prevents formation of the closed enzyme conformation by binding to the same site as the amobile flap. In contrast, mizoribine monophosphate (MZP) is a competitive inhibitor that induces the closed conformation. MPA is a potent inhibitor of mammalian IMPDHs but a poor inhibitor of the bacterial enzymes. MZP is a more potent inhibitor of bacterial IMPDH. In terms of biological role, catalyzes the conversion of inosine 5'-phosphate (IMP) to xanthosine 5'-phosphate (XMP), the first committed and rate-limiting step in the de novo synthesis of guanine nucleotides, and therefore plays an important role in the regulation of cell growth. The sequence is that of Inosine-5'-monophosphate dehydrogenase from Staphylococcus aureus (strain MW2).